The following is a 240-amino-acid chain: Heme oxygenase 1 (240 aa).

Arg10, His17, Tyr125, Lys168, and Arg172 together coordinate heme b.

Belongs to the heme oxygenase family.

The catalysed reaction is heme b + 3 reduced [NADPH--hemoprotein reductase] + 3 O2 = biliverdin IXalpha + CO + Fe(2+) + 3 oxidized [NADPH--hemoprotein reductase] + 3 H2O + H(+). Functionally, catalyzes the opening of the heme ring with the release of iron. Key enzyme in the synthesis of the chromophoric part of the photosynthetic antennae. The protein is Heme oxygenase 1 (pbsA1) of Synechocystis sp. (strain ATCC 27184 / PCC 6803 / Kazusa).